The following is a 57-amino-acid chain: Temporin-ALk (57 aa).

Positions 1–22 (MFTLKKSLLLLFFLGTINLSLC) are cleaved as a signal peptide. Residues 23-46 (EQERNAEEERRDDLGERQAEVEKR) constitute a propeptide that is removed on maturation. At Ser-56 the chain carries Serine amide.

This sequence belongs to the frog skin active peptide (FSAP) family. Temporin subfamily. In terms of tissue distribution, expressed by the skin glands.

Its subcellular location is the secreted. Antimicrobial peptide with weak activity against Gram-positive and Gram-negative bacteria and against fungi. Has been tested against S.aureus (MIC=15.0 ug/mL), B.pumilus (no activity detected), B.cereus (no activity detected), E.coli (MIC=30.0 ug/mL), B.dysenteriae (MIC=60.0 ug/mL), A.cacoaceticus (MIC=75.0 ug/mL), P.aeruginosa (MIC=25.0 ug/mL) and C.albicans (MIC=15.0 ug/mL). Also shows a weak hemolytic activity. The protein is Temporin-ALk of Amolops loloensis (Lolokou Sucker Frog).